We begin with the raw amino-acid sequence, 110 residues long: MNLQEILKEIDFKKGEGLIPTIIQDFYSGEVLMLAYMNKESLEKTIETNTTWFWSRSREELWNKGATSGNLQYVKSIHIDCDGDTLLIKVEQVGPACHTGHRSCFYTTLI.

Position 80 (D80) interacts with Mg(2+). Residue C81 participates in Zn(2+) binding. Residues D82 and D84 each coordinate Mg(2+). Zn(2+) is bound by residues C97 and C104.

The protein belongs to the PRA-CH family. Homodimer. Mg(2+) serves as cofactor. It depends on Zn(2+) as a cofactor.

Its subcellular location is the cytoplasm. It catalyses the reaction 1-(5-phospho-beta-D-ribosyl)-5'-AMP + H2O = 1-(5-phospho-beta-D-ribosyl)-5-[(5-phospho-beta-D-ribosylamino)methylideneamino]imidazole-4-carboxamide. The protein operates within amino-acid biosynthesis; L-histidine biosynthesis; L-histidine from 5-phospho-alpha-D-ribose 1-diphosphate: step 3/9. Catalyzes the hydrolysis of the adenine ring of phosphoribosyl-AMP. The sequence is that of Phosphoribosyl-AMP cyclohydrolase from Clostridium botulinum (strain 657 / Type Ba4).